A 112-amino-acid polypeptide reads, in one-letter code: Nucleoid-associated protein BCI_0116 (112 aa).

The protein belongs to the YbaB/EbfC family. As to quaternary structure, homodimer.

The protein localises to the cytoplasm. The protein resides in the nucleoid. Functionally, binds to DNA and alters its conformation. May be involved in regulation of gene expression, nucleoid organization and DNA protection. This chain is Nucleoid-associated protein BCI_0116, found in Baumannia cicadellinicola subsp. Homalodisca coagulata.